We begin with the raw amino-acid sequence, 284 residues long: N-acylphosphatidylethanolamine synthase (284 aa).

The chain crosses the membrane as a helical span at residues 21–37 (TVIMAVSAFAKAVANLC). Residues 67-72 (HMSTLD) carry the HXXXXD motif motif. Residues 122–163 (GGGIYQENMNEALQRLKDGSWLHTFPEGKVFQDDVPIRRLKW) form a hydrophilic region.

Belongs to the taffazin family. In terms of tissue distribution, essentially present in young tissues. Expressed in roots, cotyledons, leaves, and shoot and root apical meristems.

The protein localises to the cell membrane. In terms of biological role, acyltransferase that catalyzes the N-acylation of phosphatidylethanolamine to form N-acylphosphatidylethanolamine (N-acyl-PE) (e.g. NAPEs containing C16:0, C16:1, C18:0, and C18:1). Also mediates the formation of acylphosphatidylglycerol (acyl-PG) from lysoglycerophospholipid by O-acylation. Uses acyl-CoA as acyl donors. Acylates 1-acyllysophosphatidylethanolamine (1-acyllyso-PE) and 1-acyllysophosphatidylglycerol (1-acyllyso-PG) at the sn-2-position. The sequence is that of N-acylphosphatidylethanolamine synthase from Arabidopsis thaliana (Mouse-ear cress).